The primary structure comprises 617 residues: Tetratricopeptide repeat protein 39B (617 aa).

TPR repeat units follow at residues 328–361 (SLIL…QEEW) and 561–594 (PFTL…YKDY).

It belongs to the TTC39 family.

Its function is as follows. Regulates high density lipoprotein (HDL) cholesterol metabolism by promoting the ubiquitination and degradation of the oxysterols receptors LXR (NR1H2 and NR1H3). This chain is Tetratricopeptide repeat protein 39B (Ttc39b), found in Rattus norvegicus (Rat).